The primary structure comprises 651 residues: Kinesin-like protein KIF22-A (651 aa).

Residues 31–359 (RVRVAVRLRP…LNFAAKSKQI (329 aa)) enclose the Kinesin motor domain. Position 116–123 (116–123 (GPTGAGKT)) interacts with ATP. The disordered stretch occupies residues 366–413 (QETTQTVVQPAMKRPREETGHIAGSQKRKKSKNDSTESSPNSSMDTAG). Residues 401–410 (TESSPNSSMD) are compositionally biased toward polar residues. Residues 452–498 (KRERMALLKKWEESQMEIERLKEKQKELEQKAMEAEARLEKSNNSDL) are a coiled coil. An Important for regulated proteolytic degradation motif is present at residues 561 to 564 (GLEN).

The protein belongs to the TRAFAC class myosin-kinesin ATPase superfamily. Kinesin family. Ubiquitinated, leading to its subsequent proteasomal degradation.

The protein resides in the nucleus. It localises to the cytoplasm. It is found in the cytoskeleton. Kinesin family member that is involved in spindle formation and the movements of chromosomes during mitosis and meiosis. Binds to microtubules and to DNA. This is Kinesin-like protein KIF22-A (kif22-a) from Xenopus laevis (African clawed frog).